A 264-amino-acid polypeptide reads, in one-letter code: GTP cyclohydrolase FolE2 (264 aa).

The protein belongs to the GTP cyclohydrolase IV family.

The catalysed reaction is GTP + H2O = 7,8-dihydroneopterin 3'-triphosphate + formate + H(+). Its pathway is cofactor biosynthesis; 7,8-dihydroneopterin triphosphate biosynthesis; 7,8-dihydroneopterin triphosphate from GTP: step 1/1. Its function is as follows. Converts GTP to 7,8-dihydroneopterin triphosphate. The sequence is that of GTP cyclohydrolase FolE2 from Ruthia magnifica subsp. Calyptogena magnifica.